Here is a 2123-residue protein sequence, read N- to C-terminus: Bromodomain adjacent to zinc finger domain protein 2B (2123 aa).

Disordered regions lie at residues Met1 to Thr129, Thr144 to Gln306, Pro357 to Lys402, Asn473 to Pro534, Arg546 to Ala691, Arg756 to Glu793, and Ala937 to Glu960. Over residues Leu7 to Ser46 the composition is skewed to low complexity. Residues Phe83–Ala95 show a composition bias toward pro residues. Polar residues predominate over residues Asn100–Asn116. Low complexity-rich tracts occupy residues Ser147 to Ser157 and Glu193 to Ser216. Over residues Asp217–Thr243 the composition is skewed to acidic residues. Residues Ser259–Thr277 are compositionally biased toward basic and acidic residues. Low complexity-rich tracts occupy residues Pro291–Gln306 and Asn366–Glu379. The segment covering Asn473–Ala502 has biased composition (polar residues). Over residues Arg546 to Glu559 the composition is skewed to basic and acidic residues. A compositionally biased stretch (acidic residues) spans Asp560 to Ser587. Positions Glu588–Ser597 are enriched in low complexity. Over residues Glu598 to Thr615 the composition is skewed to acidic residues. Low complexity-rich tracts occupy residues Ser628–Ser637 and Thr671–Gly683. Positions Val690–Pro765 constitute an MBD domain. Residues Arg756–Arg778 are compositionally biased toward basic and acidic residues. The DDT domain maps to Gly1004 to Leu1069. 4 disordered regions span residues Arg1183–Ser1260, Pro1396–Ala1444, Thr1499–Gln1526, and Phe1588–Val1614. The span at Ser1214 to Lys1238 shows a compositional bias: acidic residues. Residues Asp1239–Ile1248 are compositionally biased toward basic and acidic residues. A coiled-coil region spans residues Glu1254 to Lys1281. 2 stretches are compositionally biased toward polar residues: residues Asn1408–Gly1422 and Pro1430–Ala1444. Residues Ser1505–Ala1515 show a composition bias toward pro residues. Over residues Phe1588–Ser1600 the composition is skewed to low complexity. A PHD-type zinc finger spans residues Lys1886–Lys1936. Positions Val1949–Pro2013 are disordered. Over residues Gly1984–Glu1995 the composition is skewed to basic and acidic residues. Polar residues predominate over residues Thr1996–Ile2010. In terms of domain architecture, Bromo spans Lys2015–Thr2119.

It belongs to the WAL family. As to quaternary structure, component of the BRF-1 ISWI chromatin remodeling complex, at least composed of SMARCA1 and BAZ2B, which regulates the spacing of histone octamers on the DNA template to facilitate access to DNA. Within the BRF-1 ISWI chromatin remodeling complex interacts with SMARCA1; the interaction is direct. Component of the BRF-5 ISWI chromatin remodeling complex, at least composed of SMARCA5/SNF2H and BAZ2B, which regulates the spacing of histone octamers on the DNA template to facilitate access to DNA. Within the BRF-5 ISWI chromatin remodeling complex interacts with SMARCA5/SNF2H; the interaction is direct. Interacts with acetylated lysine residues on histone H1.4, H2A, H2B, H3 and H4 (in vitro). Interacts with EHMT1.

The protein resides in the nucleus. Its function is as follows. Regulatory subunit of the ATP-dependent BRF-1 and BRF-5 ISWI chromatin remodeling complexes, which form ordered nucleosome arrays on chromatin and facilitate access to DNA during DNA-templated processes such as DNA replication, transcription, and repair. Both complexes regulate the spacing of nucleosomes along the chromatin and have the ability to slide mononucleosomes to the center of a DNA template. The BRF-1 ISWI chromatin remodeling complex has a lower ATP hydrolysis rate than the BRF-5 ISWI chromatin remodeling complex. Chromatin reader protein, involved in positively modulating the rate of age-related behavioral deterioration. Represses the expression of mitochondrial function-related genes, perhaps by occupying their promoter regions, working in concert with histone methyltransferase EHMT1. The polypeptide is Bromodomain adjacent to zinc finger domain protein 2B (Mus musculus (Mouse)).